A 76-amino-acid chain; its full sequence is Large ribosomal subunit protein eL20 (76 aa).

The protein belongs to the eukaryotic ribosomal protein eL20 family. In terms of assembly, part of the 50S ribosomal subunit. Binds 23S rRNA.

This chain is Large ribosomal subunit protein eL20, found in Methanococcus maripaludis (strain C6 / ATCC BAA-1332).